A 63-amino-acid chain; its full sequence is MSRRDDLTGKGPMFGNNRSHALNATRRRFNLNLQKVSVVVNGRKVNLKVSAKTAKTLRRKNLI.

The interval 1-21 is disordered; the sequence is MSRRDDLTGKGPMFGNNRSHA.

The protein belongs to the bacterial ribosomal protein bL28 family.

The polypeptide is Large ribosomal subunit protein bL28 (Mycoplasmopsis pulmonis (strain UAB CTIP) (Mycoplasma pulmonis)).